Here is a 51-residue protein sequence, read N- to C-terminus: Putative ribosomal protein eL39-like 5 (51 aa).

The protein belongs to the eukaryotic ribosomal protein eL39 family.

In Homo sapiens (Human), this protein is Putative ribosomal protein eL39-like 5 (RPL39P5).